The sequence spans 347 residues: MADTEDDNSALASFFPDPPLFWKAFTPSNLQAYAEIKQQYASQHGIPVEDVVRVPDLPADSDLIYLQPPAEPKDGTWRLYGEPQSLEESLQPLESAGIERLGPPLPGSTTTSTSNTQTTTTDSQSTTQPTTDDTQPTSAFPSQQPTSQLPLPPSSTSAPGGASSGASSTQTHDTLHLHLKRLSKSLLLNFLELLGIMSLDPAAGSQKAADLRTLFLNFHHVLNEYRPHQAREQLIQLMQERLDQTRAETAANRAVAEKARRVLEGLGSVEIPAVDDVNIAGTGTGGGDGEAGYGSAAVPVPVPVGARTGTTVGDRRVGVDGEGAEEEEKMYWEREGMGWGVLDAEFA.

2 disordered regions span residues 97–172 (GIER…TQTH) and 302–326 (VPVGARTGTTVGDRRVGVDGEGAEE). Composition is skewed to low complexity over residues 108-171 (STTT…STQT) and 302-312 (VPVGARTGTTV).

The protein belongs to the Mediator complex subunit 7 family. As to quaternary structure, component of the Mediator complex.

The protein localises to the nucleus. Component of the Mediator complex, a coactivator involved in the regulated transcription of nearly all RNA polymerase II-dependent genes. Mediator functions as a bridge to convey information from gene-specific regulatory proteins to the basal RNA polymerase II transcription machinery. Mediator is recruited to promoters by direct interactions with regulatory proteins and serves as a scaffold for the assembly of a functional preinitiation complex with RNA polymerase II and the general transcription factors. The protein is Mediator of RNA polymerase II transcription subunit 7 (med-7) of Neurospora crassa (strain ATCC 24698 / 74-OR23-1A / CBS 708.71 / DSM 1257 / FGSC 987).